A 221-amino-acid chain; its full sequence is Phosphoribosylformylglycinamidine synthase subunit PurQ (221 aa).

Residues 8-221 enclose the Glutamine amidotransferase type-1 domain; the sequence is NVGIIRFPGT…GLKFFKSFLD (214 aa). The Nucleophile role is filled by cysteine 91. Catalysis depends on residues histidine 198 and glutamate 200.

Part of the FGAM synthase complex composed of 1 PurL, 1 PurQ and 2 PurS subunits.

Its subcellular location is the cytoplasm. It carries out the reaction N(2)-formyl-N(1)-(5-phospho-beta-D-ribosyl)glycinamide + L-glutamine + ATP + H2O = 2-formamido-N(1)-(5-O-phospho-beta-D-ribosyl)acetamidine + L-glutamate + ADP + phosphate + H(+). The enzyme catalyses L-glutamine + H2O = L-glutamate + NH4(+). It participates in purine metabolism; IMP biosynthesis via de novo pathway; 5-amino-1-(5-phospho-D-ribosyl)imidazole from N(2)-formyl-N(1)-(5-phospho-D-ribosyl)glycinamide: step 1/2. Functionally, part of the phosphoribosylformylglycinamidine synthase complex involved in the purines biosynthetic pathway. Catalyzes the ATP-dependent conversion of formylglycinamide ribonucleotide (FGAR) and glutamine to yield formylglycinamidine ribonucleotide (FGAM) and glutamate. The FGAM synthase complex is composed of three subunits. PurQ produces an ammonia molecule by converting glutamine to glutamate. PurL transfers the ammonia molecule to FGAR to form FGAM in an ATP-dependent manner. PurS interacts with PurQ and PurL and is thought to assist in the transfer of the ammonia molecule from PurQ to PurL. The protein is Phosphoribosylformylglycinamidine synthase subunit PurQ of Methanosphaera stadtmanae (strain ATCC 43021 / DSM 3091 / JCM 11832 / MCB-3).